A 417-amino-acid polypeptide reads, in one-letter code: Ankyrin repeat and SAM domain-containing protein 4B (417 aa).

The tract at residues 1–252 (MSTRYHQAAS…SGDFKEKLQL (252 aa)) is mediates localization to microvilli. 3 ANK repeats span residues 31-60 (DGMTPTLLAAYHGNLEALEIICSRGGDPDR), 64-93 (WGNTPLHFAASNGHAHCVSFLVNFGANIFA), and 97-126 (DLQTPLDAAASREQNECVALLDKAATAQNI). Positions 130–164 (KKVTRLKEQAQKNARRQIKECERLQEKHQNKMAHT) form a coiled coil. A disordered region spans residues 151 to 195 (ERLQEKHQNKMAHTYSKEESGTLSSSKGTFSRSSPSNASAPGTFG). Over residues 171–190 (GTLSSSKGTFSRSSPSNASA) the composition is skewed to polar residues. A mediates interaction with MYO7B region spans residues 253–346 (SAEEDGSVHH…EWEEDVVDAT (94 aa)). Serine 283 bears the Phosphoserine mark. Positions 305–330 (RQGASEADEGAADEEGEENGLKDDLP) are disordered. Acidic residues predominate over residues 310-322 (EADEGAADEEGEE). In terms of domain architecture, SAM spans 351 to 403 (FLLSQHLEEFLPIFKREQIDLEALLLCSDEDLQSIQMQLGPRKKVLNAINRRK). Positions 415–417 (TSL) match the PDZ-binding; mediates interaction with USH1C motif.

As to quaternary structure, part of the IMAC/intermicrovillar adhesion complex/intermicrovillar tip-link complex composed of ANKS4B, MYO7B, USH1C, CDHR2 and CDHR5. Interacts with USH1C; the interaction is direct and is required for ANKS4B localization to the tip of microvilli. Interacts with MYO7B; the interaction is direct. May interact with HSPA5. Expressed in kidney and small intestine.

Its subcellular location is the cell projection. It localises to the microvillus. In terms of biological role, as part of the intermicrovillar adhesion complex/IMAC plays a role in epithelial brush border differentiation, controlling microvilli organization and length. Plays a role in assembly of the complex. May play a role in cellular response to endoplasmic reticulum stress. The protein is Ankyrin repeat and SAM domain-containing protein 4B of Homo sapiens (Human).